The sequence spans 286 residues: Protein WVD2-like 1 (286 aa).

The interval 31–101 (ETDEEFEVKE…ENKKHIDDED (71 aa)) is disordered. Threonine 32 is modified (phosphothreonine). The span at 38–47 (VKECTEEKSL) shows a compositional bias: basic and acidic residues. Residues 131–182 (AQRAEKRKEYYQKLEEKNQALEAERNELEQRQKDEQEAALKQLRKNLKFKAK) are a coiled coil. The tract at residues 186–286 (NFYYEAPPAK…KPVNESSEEA (101 aa)) is disordered. The segment covering 234–247 (TVSNRNRHSTGTVQ) has biased composition (polar residues).

This sequence belongs to the TPX2 family.

It is found in the cytoplasm. The protein resides in the cytoskeleton. In terms of biological role, microtubule-associated protein (MAP) that regulates the orientation of interphase cortical microtubules. Modulates both rotational polarity and anisotropic cell expansion during organ growth. Promotes clockwise root and etiolated hypocotyls coiling, clockwise leaf curling, but left-handed petiole twisting. The protein is Protein WVD2-like 1 (WDL1) of Arabidopsis thaliana (Mouse-ear cress).